The primary structure comprises 117 residues: Large ribosomal subunit protein eL22 (117 aa).

Phosphoserine occurs at positions 49 and 50.

This sequence belongs to the eukaryotic ribosomal protein eL22 family. As to quaternary structure, component of the large ribosomal subunit (LSU). Mature yeast ribosomes consist of a small (40S) and a large (60S) subunit. The 40S small subunit contains 1 molecule of ribosomal RNA (18S rRNA) and at least 33 different proteins. The large 60S subunit contains 3 rRNA molecules (25S, 5.8S and 5S rRNA) and at least 46 different proteins.

It localises to the cytoplasm. It is found in the nucleus. Its subcellular location is the nucleolus. Its function is as follows. Component of the ribosome, a large ribonucleoprotein complex responsible for the synthesis of proteins in the cell. The small ribosomal subunit (SSU) binds messenger RNAs (mRNAs) and translates the encoded message by selecting cognate aminoacyl-transfer RNA (tRNA) molecules. The large subunit (LSU) contains the ribosomal catalytic site termed the peptidyl transferase center (PTC), which catalyzes the formation of peptide bonds, thereby polymerizing the amino acids delivered by tRNAs into a polypeptide chain. The nascent polypeptides leave the ribosome through a tunnel in the LSU and interact with protein factors that function in enzymatic processing, targeting, and the membrane insertion of nascent chains at the exit of the ribosomal tunnel. This is Large ribosomal subunit protein eL22 (rpl22) from Schizosaccharomyces pombe (strain 972 / ATCC 24843) (Fission yeast).